Here is a 195-residue protein sequence, read N- to C-terminus: Ribonuclease HII (195 aa).

Residues 8 to 195 enclose the RNase H type-2 domain; it reads WGVVGVDEAG…FAPVRRLLGG (188 aa). Residues D14, E15, and D106 each coordinate a divalent metal cation.

This sequence belongs to the RNase HII family. Mn(2+) is required as a cofactor. The cofactor is Mg(2+).

The protein resides in the cytoplasm. It carries out the reaction Endonucleolytic cleavage to 5'-phosphomonoester.. In terms of biological role, endonuclease that specifically degrades the RNA of RNA-DNA hybrids. This is Ribonuclease HII from Halorhodospira halophila (strain DSM 244 / SL1) (Ectothiorhodospira halophila (strain DSM 244 / SL1)).